The sequence spans 302 residues: 4-diphosphocytidyl-2-C-methyl-D-erythritol kinase (302 aa).

The active site involves Lys20. Position 106-116 (106-116) interacts with ATP; it reads PVASGVGGGSG. Asp148 is a catalytic residue.

Belongs to the GHMP kinase family. IspE subfamily.

It catalyses the reaction 4-CDP-2-C-methyl-D-erythritol + ATP = 4-CDP-2-C-methyl-D-erythritol 2-phosphate + ADP + H(+). It participates in isoprenoid biosynthesis; isopentenyl diphosphate biosynthesis via DXP pathway; isopentenyl diphosphate from 1-deoxy-D-xylulose 5-phosphate: step 3/6. Functionally, catalyzes the phosphorylation of the position 2 hydroxy group of 4-diphosphocytidyl-2C-methyl-D-erythritol. This chain is 4-diphosphocytidyl-2-C-methyl-D-erythritol kinase, found in Bartonella henselae (strain ATCC 49882 / DSM 28221 / CCUG 30454 / Houston 1) (Rochalimaea henselae).